Consider the following 662-residue polypeptide: DCC-interacting protein 13-beta (662 aa).

A required for RAB5A binding region spans residues 1–428 (MPAVDKLLLE…NSDIEDDNIV (428 aa)). A BAR domain is found at 3–268 (AVDKLLLEEA…ESVYTPDIDV (266 aa)). In terms of domain architecture, PH spans 277–375 (LIQKTGYLNL…WICAVNNISR (99 aa)). The 150-residue stretch at 486–635 (SLLQQMFIVR…LMLSVPLTND (150 aa)) folds into the PID domain. The disordered stretch occupies residues 642–662 (NDQADDTGGSPSENRGAESEA).

In terms of assembly, homodimer. Homotetramer. Binds RAB5A/Rab5 through an N-terminal domain. This interaction is essential for its recruitment to endosomal membranes as well as its role in cell proliferation. Binds subunits of the NuRD/MeCP1 complex. Interacts with FSHR; interaction is independent of follicle stimulating hormone stimulation. Interacts with APPL1; the interaction is decreased by adiponectin in a time-dependent manner. Forms a complex comprising APPL1, RUVBL2, CTNNB1, HDAC1 and HDAC2; interaction reduces interaction between CTNNB1, HDAC1, HDAC2 and RUVBL2 leading to the decrease of deacetylase activity of this complex; affects the recruitment of repressive complexes to the Wnt target genes. Interacts (via BAR domain) with TBC1D1; interaction is dependent of TBC1D1 phosphorylation at 'Ser-235'; interaction diminishes the phosphorylation of TBC1D1 at 'Thr-596', resulting in inhibition of SLC2A4 translocation and glucose uptake. Interacts with ANXA2; targets APPL2 to endosomes and acting in parallel to RAB5A. Interacts with RAB31 (in GTP-bound form); interaction contributes to or enhances recruitment of APPL2 to the phagosomes; interaction enhances Fc-gamma receptor-mediated phagocytosis through PI3K/Akt signaling in macrophages. Interacts with PIK3R1; forms a complex with PIK3R1 and APPL1. Interacts (via BAR domain) with ADIPOR1; hinders the accessibility of APPL1 to ADIPOR1; negatively regulates adiponectin signaling; ADIPOQ dissociates this interaction and facilitates the recruitment of APPL1 to ADIPOR1. Interacts (via BAR domain) with ADIPOR2; ADIPOQ dissociates this interaction. In terms of tissue distribution, expressed in insulin-target tissues including skeletal muscle, liver, fat, and brain. Highly expressed in kidney and pancreas. Abundantly expressed in the ventromedial hypothalamus (VMH), barely detectable in the arcuate nucleus (ARC) and paraventricular nucleus (PVN) of the hypothalamus. Also expressed in pancreatic beta-cells.

The protein localises to the early endosome membrane. Its subcellular location is the nucleus. It localises to the cell membrane. The protein resides in the endosome membrane. It is found in the cytoplasm. The protein localises to the cytoplasmic vesicle. Its subcellular location is the phagosome. It localises to the cell projection. The protein resides in the ruffle. It is found in the ruffle membrane. The protein localises to the phagosome membrane. Its function is as follows. Multifunctional adapter protein that binds to various membrane receptors, nuclear factors and signaling proteins to regulate many processes, such as cell proliferation, immune response, endosomal trafficking and cell metabolism. Regulates signaling pathway leading to cell proliferation through interaction with RAB5A and subunits of the NuRD/MeCP1 complex. Plays a role in immune response by modulating phagocytosis, inflammatory and innate immune responses. In macrophages, enhances Fc-gamma receptor-mediated phagocytosis through interaction with RAB31 leading to activation of PI3K/Akt signaling. In response to LPS, modulates inflammatory responses by playing a key role on the regulation of TLR4 signaling and in the nuclear translocation of RELA/NF-kappa-B p65 and the secretion of pro- and anti-inflammatory cytokines. Also functions as a negative regulator of innate immune response via inhibition of AKT1 signaling pathway by forming a complex with APPL1 and PIK3R1. Plays a role in endosomal trafficking of TGFBR1 from the endosomes to the nucleus. Plays a role in cell metabolism by regulating adiponectin and insulin signaling pathways and adaptative thermogenesis. In muscle, negatively regulates adiponectin-simulated glucose uptake and fatty acid oxidation by inhibiting adiponectin signaling pathway through APPL1 sequestration thereby antagonizing APPL1 action. In muscles, negatively regulates insulin-induced plasma membrane recruitment of GLUT4 and glucose uptake through interaction with TBC1D1. Plays a role in cold and diet-induced adaptive thermogenesis by activating ventromedial hypothalamus (VMH) neurons throught AMPK inhibition which enhances sympathetic outflow to subcutaneous white adipose tissue (sWAT), sWAT beiging and cold tolerance. Also plays a role in other signaling pathways namely Wnt/beta-catenin, HGF and glucocorticoid receptor signaling. Positive regulator of beta-catenin/TCF-dependent transcription through direct interaction with RUVBL2/reptin resulting in the relief of RUVBL2-mediated repression of beta-catenin/TCF target genes by modulating the interactions within the beta-catenin-reptin-HDAC complex. May affect adult neurogenesis in hippocampus and olfactory system via regulating the sensitivity of glucocorticoid receptor. Required for fibroblast migration through HGF cell signaling. The sequence is that of DCC-interacting protein 13-beta from Mus musculus (Mouse).